An 872-amino-acid chain; its full sequence is MLTAKEIRDSFKNFFESKGHHIVPSAPMVIKDDPTLMFTNAGMNQFKDIILGNHPAKYHRVADSQKCLRVSGKHNDLEEVGHDTYHHTMFEMLGNWSFGDYFKKEAINWAWEYLVEVLKLNPEHLYATVFEGSPEEGLSRDDEAASYWEQYLPKDHIINGNKHDNFWEMGDTGPCGPCSEIHIDLRPAEERAKISGRDLVNHDHPQVIEIWNLVFMQYNRKADGSLEPLPAKVIDTGMGFERLCMALQGKTSNYDTDVFQPMLKAIAAMSGTEYGKDKQQDIAMRVIADHIRTIAFSITDGQLPSNAKAGYVIRRILRRAVRYGYTFLGQKQSFMYKLLPVLIDNMGDAYPELIAQKGLIEKVIKEEEEAFLRTLETGIRLLDKTMGDTKAAGKTEISGKDAFTLYDTFGFPLDLTELILRENGMTVNIEEFNAEMQQQKQRARNAAAIETGDWVTLREGTTEFVGYDYTEYEASILRYRQIKQKNQTLYQIVLDCTPFYAESGGQVGDTGVLVSEFETIEVIDTKKENNLPIHITKKLPEHPEAPMMACVDTDKRAACAANHSATHLLDSALREVLGEHIEQKGSLVTPDSLRFDFSHFQKVTDEEIRQVEHLVNAKIRANIPLKEYRNIPIEEAKELGAIALFGEKYGERVRVIQFGSSIEFCGGIHVAATGNIGMVKIISESSVAAGVRRIEAYTGARVEEMLDTIQDTISELKSLFNNAPDLGIAIRKYIEENAGLKKQVEDYMKEKEASLKERLLKNIQEIHGIKVIKFCAPLPAEVVKNIAFQLRGEITENLFFVAGSLDNGKPMLTVMLSDNLVAGGLKAGNLVKEAAKLIQGGGGGQPHFATAGGKNTDGLNAAIEKVLELAGI.

Zn(2+) contacts are provided by H563, H567, C665, and H669.

This sequence belongs to the class-II aminoacyl-tRNA synthetase family. It depends on Zn(2+) as a cofactor.

The protein resides in the cytoplasm. It carries out the reaction tRNA(Ala) + L-alanine + ATP = L-alanyl-tRNA(Ala) + AMP + diphosphate. Catalyzes the attachment of alanine to tRNA(Ala) in a two-step reaction: alanine is first activated by ATP to form Ala-AMP and then transferred to the acceptor end of tRNA(Ala). Also edits incorrectly charged Ser-tRNA(Ala) and Gly-tRNA(Ala) via its editing domain. The protein is Alanine--tRNA ligase of Bacteroides thetaiotaomicron (strain ATCC 29148 / DSM 2079 / JCM 5827 / CCUG 10774 / NCTC 10582 / VPI-5482 / E50).